A 338-amino-acid polypeptide reads, in one-letter code: Oligopeptide transport ATP-binding protein OppD (338 aa).

The ABC transporter domain occupies leucine 7–leucine 257. Glycine 43–serine 50 contributes to the ATP binding site.

Belongs to the ABC transporter superfamily. The complex is composed of two ATP-binding proteins (OppD and OppF), two transmembrane proteins (OppB and OppC) and a solute-binding protein (OppA).

The protein resides in the cell membrane. It carries out the reaction a [peptide](out) + ATP + H2O = a [peptide](in) + ADP + phosphate + H(+). Part of the ABC transporter complex OppABCDF involved in the uptake of oligopeptides. Probably responsible for energy coupling to the transport system. Essential for uptake of peptides larger than three amino acids and for growth in milk. The sequence is that of Oligopeptide transport ATP-binding protein OppD from Lactococcus lactis subsp. cremoris (strain SK11).